A 250-amino-acid polypeptide reads, in one-letter code: Thioesterase FPSE_09186 (250 aa).

The protein belongs to the AMT4 thioesterase family.

It functions in the pathway secondary metabolite biosynthesis. Functionally, thioesterase; part of the gene cluster that mediates the biosynthesis of the lipopeptides W493 A and B. W493 A and B consist of six amino acid residues D-allo-thr, L-Ala, D-Ala, L-Gln, D-Tyr, and L-Val/L-Ile linked to a 3-hydroxy-4-methyltetradecanoic acid polyketide chain. The biosynthesis starts with formation of the linear polyketide chain by the highly reducing polyketide synthase PKS40. The gene cluster contains a putative acyl-CoA ligase (FPSE_09184) for formation of a CoA thioester polyketide. The thiol bond could be hydrolyzed by the putative thioesterase (FPSE_09186) and then accepted by the first T domain in module 1 of NRPS32. The second T domain is responsible for accepting a threonine, which is adenylated by the A domain and epimerized to the D-allo-threonine formed by the E domain. The five successive modules incorporate Ala, Ala, Gln, Tyr, and Val/Ile into the final product, which is released by cyclization. The polypeptide is Thioesterase FPSE_09186 (Fusarium pseudograminearum (strain CS3096) (Wheat and barley crown-rot fungus)).